Here is a 472-residue protein sequence, read N- to C-terminus: MVISNSIKTSVPHFVISDISLSDFGRKEIKIAETEMPGLMALRDKYQSEKPLKGAKIAGSLHMTIQTAVLIETLVDLGAQVKWASCNIFSTQDHAAAAIADRGIPVFAKKGETLDEYWQYTHYILDWGSDSPNMILDDGGDATGLLILGSKAEKDLSVLDNPSNEEETALFSSIKSKLQVDGSFYSRIKSNIIGVTEETTTGVARLYQLQKQKSLPFPAINVNDSVTKSKFDNLYGCRESLVDSIKRATDVMIAGKVALVIGFGDVGKGSAQSLRGLGAIVKVAEVDPICALQAAMEGYSVVRLEDVVEDIDIFVTATGNYQVITKENLVKMKNEAIVCNIGHFDNEIDVASLKNYPWENIKPQVDHITLPSGNKIILLAEGRLVNLGCATGHPSFVMSNSFTNQVLAQIELFNKSEQYAKEVYVLPKHLDEMVARLHLDKIGAKLTKLTKEQADYINVSVEGPYKSELYRY.

3 residues coordinate substrate: threonine 64, aspartate 138, and glutamate 198. 199–201 (TTT) is a binding site for NAD(+). Residues lysine 228 and aspartate 232 each coordinate substrate. NAD(+) is bound by residues asparagine 233, 262-267 (GFGDVG), glutamate 285, asparagine 320, 341-343 (IGH), and asparagine 386.

This sequence belongs to the adenosylhomocysteinase family. NAD(+) serves as cofactor.

Its subcellular location is the cytoplasm. It catalyses the reaction S-adenosyl-L-homocysteine + H2O = L-homocysteine + adenosine. It functions in the pathway amino-acid biosynthesis; L-homocysteine biosynthesis; L-homocysteine from S-adenosyl-L-homocysteine: step 1/1. May play a key role in the regulation of the intracellular concentration of adenosylhomocysteine. This chain is Adenosylhomocysteinase, found in Prochlorococcus marinus (strain MIT 9215).